A 604-amino-acid polypeptide reads, in one-letter code: Prostaglandin G/H synthase 2 (604 aa).

Residues 1-17 (MLARALLLCAAVALSHA) form the signal peptide. The EGF-like domain occupies 18 to 55 (ANPCCSNPCQNRGVCMTMGFDQYKCDCTRTGFYGENCS). Disulfide bonds link cysteine 21-cysteine 32, cysteine 22-cysteine 145, cysteine 26-cysteine 42, and cysteine 44-cysteine 54. An N-linked (GlcNAc...) asparagine glycan is attached at asparagine 53. Arginine 106 is a substrate binding site. N-linked (GlcNAc...) asparagine glycosylation occurs at asparagine 130. Catalysis depends on histidine 193, which acts as the Proton acceptor. Residue tyrosine 341 participates in substrate binding. Tyrosine 371 acts as the For cyclooxygenase activity in catalysis. Histidine 374 is a heme b binding site. A glycan (N-linked (GlcNAc...) asparagine) is linked at asparagine 396. S-nitrosocysteine is present on cysteine 526. The cysteines at positions 555 and 561 are disulfide-linked. Position 565 is an O-acetylserine (serine 565). Asparagine 580 carries an N-linked (GlcNAc...) asparagine glycan.

The protein belongs to the prostaglandin G/H synthase family. In terms of assembly, homodimer. The cofactor is heme b. In terms of processing, S-nitrosylation by NOS2 (iNOS) activates enzyme activity. S-nitrosylation may take place on different Cys residues in addition to Cys-526. Post-translationally, acetylated at Ser-565 by SPHK1. During neuroinflammation, acetylation by SPHK1 promotes neuronal secretion of specialized preresolving mediators (SPMs), especially 15-R-lipoxin A4, which results in an increase of phagocytic microglia. Highest expression in kidney and urinary bladder.

The protein localises to the microsome membrane. It localises to the endoplasmic reticulum membrane. Its subcellular location is the nucleus inner membrane. It is found in the nucleus outer membrane. It catalyses the reaction (5Z,8Z,11Z,14Z)-eicosatetraenoate + AH2 + 2 O2 = prostaglandin H2 + A + H2O. The enzyme catalyses (5Z,8Z,11Z,14Z)-eicosatetraenoate + 2 O2 = prostaglandin G2. It carries out the reaction prostaglandin G2 + AH2 = prostaglandin H2 + A + H2O. The catalysed reaction is (5Z,8Z,11Z,14Z,17Z)-eicosapentaenoate + 2 O2 = prostaglandin G3. It catalyses the reaction prostaglandin G3 + AH2 = prostaglandin H3 + A + H2O. The enzyme catalyses (8Z,11Z,14Z)-eicosatrienoate + 2 O2 = prostaglandin G1. It carries out the reaction prostaglandin G1 + AH2 = prostaglandin H1 + A + H2O. The catalysed reaction is 2-(5Z,8Z,11Z,14Z)-eicosatetraenoyl-sn-glycero-3-phosphoethanolamine + 2 O2 = 2-(prostaglandin G2)-sn-glycero-3-phosphoethanolamine. It catalyses the reaction 2-(prostaglandin G2)-sn-glycero-3-phosphoethanolamine + AH2 = 2-(prostaglandin H2)-sn-glycero-3-phosphoethanolamine + A + H2O. The enzyme catalyses 2-(5Z,8Z,11Z,14Z)-eicosatetraenoyl-sn-glycero-3-phosphocholine + 2 O2 = 2-(prostaglandin G2)-sn-glycero-3-phosphocholine. It carries out the reaction 2-(prostaglandin G2)-sn-glycero-3-phosphocholine + AH2 = 2-(prostaglandin H2)-sn-glycero-3-phosphocholine + A + H2O. The catalysed reaction is (15S)-hydroperoxy-(5Z,8Z,11Z,13E)-eicosatetraenoate + AH2 = (15S)-hydroxy-(5Z,8Z,11Z,13E)-eicosatetraenoate + A + H2O. It catalyses the reaction 2-(5Z,8Z,11Z,14Z)-eicosatetraenoyl-sn-glycero-3-phosphocholine + AH2 + O2 = 2-[(15S)-hydroxy-(5Z,8Z,11Z,13E)-eicosatetraenoyl]-sn-glycero-3-phosphocholine + A + H2O. The enzyme catalyses 2-(5Z,8Z,11Z,14Z)-eicosatetraenoyl-sn-glycero-3-phosphocholine + AH2 + O2 = 2-[(15R)-hydroxy-(5Z,8Z,11Z,13E)-eicosatetraenoyl]-sn-glycero-3-phosphocholine + A + H2O. It carries out the reaction 2-(5Z,8Z,11Z,14Z)-eicosatetraenoyl-sn-glycero-3-phosphocholine + AH2 + O2 = 2-[(11R)-hydroxy-(5Z,8Z,12E,14Z)-eicosatetraenoyl]-sn-glycero-3-phosphocholine + A + H2O. The catalysed reaction is (9Z,12Z)-octadecadienoate + AH2 + O2 = 9-hydroxy-(10E,12Z)-octadecadienoate + A + H2O. It catalyses the reaction (9Z,12Z)-octadecadienoate + AH2 + O2 = 13-hydroxy-(9Z,11E)-octadecadienoate + A + H2O. The enzyme catalyses (5Z,8Z,11Z,14Z)-eicosatetraenoate + AH2 + O2 = (15R)-hydroxy-(5Z,8Z,11Z,13E)-eicosatetraenoate + A + H2O. It carries out the reaction (5Z,8Z,11Z,14Z)-eicosatetraenoate + AH2 + O2 = (11R)-hydroxy-(5Z,8Z,12E,14Z)-eicosatetraenoate + A + H2O. The catalysed reaction is (5Z,8Z,11Z,14Z,17Z)-eicosapentaenoate + AH2 + O2 = (11R)-hydroxy-(5Z,8Z,12E,14Z,17Z)-eicosapentaenoate + A + H2O. It catalyses the reaction (5Z,8Z,11Z,14Z,17Z)-eicosapentaenoate + AH2 + O2 = (18S)-hydroxy-(5Z,8Z,11Z,14Z,16E)-eicosapentaenoate + A + H2O. The enzyme catalyses (5Z,8Z,11Z,14Z,17Z)-eicosapentaenoate + AH2 + O2 = (18R)-hydroxy-(5Z,8Z,11Z,14Z,16E)-eicosapentaenoate + A + H2O. It carries out the reaction (5Z,8Z,11Z,14Z,17Z)-eicosapentaenoate + AH2 + O2 = (15R)-hydroxy-(5Z,8Z,11Z,13E,17Z)-eicosapentaenoate + A + H2O. The catalysed reaction is (5Z,8Z,11Z,14Z,17Z)-eicosapentaenoate + AH2 + O2 = (15S)-hydroxy-(5Z,8Z,11Z,13E,17Z)-eicosapentaenoate + A + H2O. It catalyses the reaction (7Z,10Z,13Z,16Z,19Z)-docosapentaenoate + AH2 + O2 = 13R-hydroxy-(7Z,10Z,14E,16Z,19Z)-docosapentaenoate + A + H2O. The enzyme catalyses (4Z,7Z,10Z,13Z,16Z,19Z)-docosahexaenoate + AH2 + O2 = 13-hydroxy-(4Z,7Z,10Z,14E,16Z,19Z)-docosahexaenoate + A + H2O. It carries out the reaction (5S)-hydroxy-(6E,8Z,11Z,14Z)-eicosatetraenoate + AH2 + O2 = (5S,15R)-dihydroxy-(6E,8Z,11Z,13E)-eicosatetraenoate + A + H2O. The catalysed reaction is (4Z,7Z,10Z,13Z,16Z,19Z)-docosahexaenoate + AH2 + O2 = 17R-hydroxy-(4Z,7Z,10Z,13Z,15E,19Z)-docosahexaenoate + A + H2O. It catalyses the reaction (5S)-hydroxy-(6E,8Z,11Z,14Z)-eicosatetraenoate + AH2 + O2 = (5S,15S)-dihydroxy-(6E,8Z,11Z,13E)-eicosatetraenoate + A + H2O. The enzyme catalyses (5S)-hydroxy-(6E,8Z,11Z,14Z)-eicosatetraenoate + AH2 + O2 = (5S,11R)-dihydroxy-(6E,8Z,12E,14Z)-eicosatetraenoate + A + H2O. It carries out the reaction 2-(5Z,8Z,11Z,14Z-eicosatetraenoyl)-glycerol + 2 O2 = 2-glyceryl-prostaglandin G2. The catalysed reaction is 2-glyceryl-prostaglandin G2 + AH2 = 2-glyceryl-prostaglandin H2 + A + H2O. It catalyses the reaction (5Z,8Z,11Z,14Z)-eicosatetraenoate + O2 = (15R)-hydroperoxy-(5Z,8Z,11Z,13E)-eicosatetraenoate. The enzyme catalyses (5Z,8Z,11Z,14Z)-eicosatetraenoate + O2 = 11R-hydroperoxy-(5Z,8Z,12E,14Z)-eicosatetraenoate. It carries out the reaction (9Z,12Z)-octadecadienoate + AH2 + O2 = (9R)-hydroxy-(10E,12Z)-octadecadienoate + A + H2O. The catalysed reaction is (9Z,12Z)-octadecadienoate + AH2 + O2 = (9S)-hydroxy-(10E,12Z)-octadecadienoate + A + H2O. It catalyses the reaction (9Z,12Z)-octadecadienoate + AH2 + O2 = (13S)-hydroxy-(9Z,11E)-octadecadienoate + A + H2O. The enzyme catalyses (9Z,12Z)-octadecadienoate + AH2 + O2 = (13R)-hydroxy-(9Z,11E)-octadecadienoate + A + H2O. It participates in lipid metabolism; prostaglandin biosynthesis. Dual cyclooxygenase and peroxidase in the biosynthesis pathway of prostanoids, a class of C20 oxylipins mainly derived from arachidonate ((5Z,8Z,11Z,14Z)-eicosatetraenoate, AA, C20:4(n-6)), with a particular role in the inflammatory response. The cyclooxygenase activity oxygenates AA to the hydroperoxy endoperoxide prostaglandin G2 (PGG2), and the peroxidase activity reduces PGG2 to the hydroxy endoperoxide prostaglandin H2 (PGH2), the precursor of all 2-series prostaglandins and thromboxanes. This complex transformation is initiated by abstraction of hydrogen at carbon 13 (with S-stereochemistry), followed by insertion of molecular O2 to form the endoperoxide bridge between carbon 9 and 11 that defines prostaglandins. The insertion of a second molecule of O2 (bis-oxygenase activity) yields a hydroperoxy group in PGG2 that is then reduced to PGH2 by two electrons. Similarly catalyzes successive cyclooxygenation and peroxidation of dihomo-gamma-linoleate (DGLA, C20:3(n-6)) and eicosapentaenoate (EPA, C20:5(n-3)) to corresponding PGH1 and PGH3, the precursors of 1- and 3-series prostaglandins. In an alternative pathway of prostanoid biosynthesis, converts 2-arachidonoyl lysophopholipids to prostanoid lysophopholipids, which are then hydrolyzed by intracellular phospholipases to release free prostanoids. Metabolizes 2-arachidonoyl glycerol yielding the glyceryl ester of PGH2, a process that can contribute to pain response. Generates lipid mediators from n-3 and n-6 polyunsaturated fatty acids (PUFAs) via a lipoxygenase-type mechanism. Oxygenates PUFAs to hydroperoxy compounds and then reduces them to corresponding alcohols. Plays a role in the generation of resolution phase interaction products (resolvins) during both sterile and infectious inflammation. Metabolizes docosahexaenoate (DHA, C22:6(n-3)) to 17R-HDHA, a precursor of the D-series resolvins (RvDs). As a component of the biosynthetic pathway of E-series resolvins (RvEs), converts eicosapentaenoate (EPA, C20:5(n-3)) primarily to 18S-HEPE that is further metabolized by ALOX5 and LTA4H to generate 18S-RvE1 and 18S-RvE2. In vascular endothelial cells, converts docosapentaenoate (DPA, C22:5(n-3)) to 13R-HDPA, a precursor for 13-series resolvins (RvTs) shown to activate macrophage phagocytosis during bacterial infection. In activated leukocytes, contributes to oxygenation of hydroxyeicosatetraenoates (HETE) to diHETES (5,15-diHETE and 5,11-diHETE). Can also use linoleate (LA, (9Z,12Z)-octadecadienoate, C18:2(n-6)) as substrate and produce hydroxyoctadecadienoates (HODEs) in a regio- and stereospecific manner,being (9R)-HODE ((9R)-hydroxy-(10E,12Z)-octadecadienoate) and (13S)-HODE ((13S)-hydroxy-(9Z,11E)-octadecadienoate) its major products. During neuroinflammation, plays a role in neuronal secretion of specialized preresolving mediators (SPMs) 15R-lipoxin A4 that regulates phagocytic microglia. This Oryctolagus cuniculus (Rabbit) protein is Prostaglandin G/H synthase 2 (PTGS2).